A 1400-amino-acid polypeptide reads, in one-letter code: DNA-directed RNA polymerase subunit beta' (1400 aa).

Zn(2+) is bound by residues C71, C73, C86, and C89. The Mg(2+) site is built by D462, D464, and D466. Zn(2+) is bound by residues C811, C885, C892, and C895.

Belongs to the RNA polymerase beta' chain family. In terms of assembly, the RNAP catalytic core consists of 2 alpha, 1 beta, 1 beta' and 1 omega subunit. When a sigma factor is associated with the core the holoenzyme is formed, which can initiate transcription. The cofactor is Mg(2+). Zn(2+) serves as cofactor.

The catalysed reaction is RNA(n) + a ribonucleoside 5'-triphosphate = RNA(n+1) + diphosphate. Its function is as follows. DNA-dependent RNA polymerase catalyzes the transcription of DNA into RNA using the four ribonucleoside triphosphates as substrates. The sequence is that of DNA-directed RNA polymerase subunit beta' from Brucella suis biovar 1 (strain 1330).